The primary structure comprises 196 residues: Molybdopterin synthase catalytic subunit (196 aa).

Residues 110–111 (HR), K126, and 133–135 (KKE) each bind substrate. The tract at residues 142–196 (GGIWRANRDGAVGERVDEDEEKKKPDMGPHGPILRPSRPGERGHGPVVRNHQLGS) is disordered. Residues 147 to 168 (ANRDGAVGERVDEDEEKKKPDM) are compositionally biased toward basic and acidic residues.

This sequence belongs to the MoaE family. MOCS2B subfamily. As to quaternary structure, heterotetramer; composed of 2 small (MOCS2A) and 2 large (MOCS2B) subunits.

The protein resides in the cytoplasm. The catalysed reaction is 2 [molybdopterin-synthase sulfur-carrier protein]-C-terminal-Gly-aminoethanethioate + cyclic pyranopterin phosphate + H2O = molybdopterin + 2 [molybdopterin-synthase sulfur-carrier protein]-C-terminal Gly-Gly + 2 H(+). It functions in the pathway cofactor biosynthesis; molybdopterin biosynthesis. Functionally, catalytic subunit of the molybdopterin synthase complex, a complex that catalyzes the conversion of precursor Z into molybdopterin. Acts by mediating the incorporation of 2 sulfur atoms from thiocarboxylated MOCS2A into precursor Z to generate a dithiolene group. The protein is Molybdopterin synthase catalytic subunit of Sclerotinia sclerotiorum (strain ATCC 18683 / 1980 / Ss-1) (White mold).